Reading from the N-terminus, the 173-residue chain is Mediator of RNA polymerase II transcription subunit 10 (173 aa).

The span at 1-20 (MDPNSPMFQNTPQQPMSLQR) shows a compositional bias: polar residues. The tract at residues 1-45 (MDPNSPMFQNTPQQPMSLQRSVDDRIDRERTAKKEKDDEKKKQED) is disordered. Positions 21–45 (SVDDRIDRERTAKKEKDDEKKKQED) are enriched in basic and acidic residues.

The protein belongs to the Mediator complex subunit 10 family. In terms of assembly, component of the Mediator complex.

The protein localises to the nucleus. Component of the Mediator complex, a coactivator involved in the regulated transcription of nearly all RNA polymerase II-dependent genes. Mediator functions as a bridge to convey information from gene-specific regulatory proteins to the basal RNA polymerase II transcription machinery. Mediator is recruited to promoters by direct interactions with regulatory proteins and serves as a scaffold for the assembly of a functional preinitiation complex with RNA polymerase II and the general transcription factors. The chain is Mediator of RNA polymerase II transcription subunit 10 (mdt-10) from Caenorhabditis briggsae.